Reading from the N-terminus, the 410-residue chain is Peptidase T (410 aa).

A Zn(2+)-binding site is contributed by histidine 77. Residue aspartate 79 is part of the active site. Aspartate 140 serves as a coordination point for Zn(2+). The active-site Proton acceptor is the glutamate 174. Glutamate 175, aspartate 197, and histidine 379 together coordinate Zn(2+).

The protein belongs to the peptidase M20B family. Zn(2+) is required as a cofactor.

The protein resides in the cytoplasm. It catalyses the reaction Release of the N-terminal residue from a tripeptide.. In terms of biological role, cleaves the N-terminal amino acid of tripeptides. This is Peptidase T from Desulfitobacterium hafniense (strain DSM 10664 / DCB-2).